The chain runs to 42 residues: MTTGKPQSFEKMRTPFPGRSKAKGPQSDIIPSAPPNTPVTEH.

Residues 1–42 (MTTGKPQSFEKMRTPFPGRSKAKGPQSDIIPSAPPNTPVTEH) form a disordered region. Over residues 32-42 (SAPPNTPVTEH) the composition is skewed to pro residues.

This is an uncharacterized protein from Schizosaccharomyces pombe (strain 972 / ATCC 24843) (Fission yeast).